The following is a 247-amino-acid chain: Chloride intracellular channel protein 2 (247 aa).

Residues M1–L94 are N-terminal. The tract at residues M1–P96 is required for insertion into the membrane. E25 is a binding site for glutathione. The G-site motif lies at C30–C33. The cysteines at positions 30 and 33 are disulfide-linked. A helical membrane pass occupies residues F32–V52. The GST C-terminal domain occupies N76–Y239. Positions A95–Y106 are joint loop. A C-terminal region spans residues K107 to S247. Positions N151–R171 are foot loop. H227 serves as a coordination point for glutathione.

It belongs to the chloride channel CLIC family. As to quaternary structure, monomer. Interacts with TRAPPC2 and RYR2. Expressed in adult and fetal brain, heart, skeletal muscle, liver, lung, and spleen. Detected in adult stomach and testis. Expressed in fetal thymus and kidney.

The protein resides in the cytoplasm. The protein localises to the membrane. It carries out the reaction chloride(in) = chloride(out). It catalyses the reaction tert-butyl hydroperoxide + 2 glutathione = tert-butanol + glutathione disulfide + H2O. The enzyme catalyses cumene hydroperoxide + 2 glutathione = 2-phenylpropan-2-ol + glutathione disulfide + H2O. With respect to regulation, the channel conductance is regulated by pH. Its function is as follows. In the soluble state, catalyzes glutaredoxin-like thiol disulfide exchange reactions with reduced glutathione as electron donor. Displays weak glutathione peroxidase activity. Can insert into membranes and form chloride ion channels. Membrane insertion seems to be redox-regulated and may occur only under oxidizing conditions. Modulates the activity of RYR2 and inhibits calcium influx. The sequence is that of Chloride intracellular channel protein 2 from Homo sapiens (Human).